Here is a 383-residue protein sequence, read N- to C-terminus: 1-deoxy-D-xylulose 5-phosphate reductoisomerase (383 aa).

The NADPH site is built by Thr-10, Gly-11, Ser-12, Ile-13, Asn-38, and Asn-121. Lys-122 is a binding site for 1-deoxy-D-xylulose 5-phosphate. Position 123 (Glu-123) interacts with NADPH. Position 147 (Asp-147) interacts with Mn(2+). 1-deoxy-D-xylulose 5-phosphate-binding residues include Ser-148, Glu-149, Ser-172, and His-195. Glu-149 serves as a coordination point for Mn(2+). Gly-201 lines the NADPH pocket. 4 residues coordinate 1-deoxy-D-xylulose 5-phosphate: Ser-208, Asn-213, Lys-214, and Glu-217. Glu-217 serves as a coordination point for Mn(2+).

It belongs to the DXR family. Requires Mg(2+) as cofactor. It depends on Mn(2+) as a cofactor.

It catalyses the reaction 2-C-methyl-D-erythritol 4-phosphate + NADP(+) = 1-deoxy-D-xylulose 5-phosphate + NADPH + H(+). It functions in the pathway isoprenoid biosynthesis; isopentenyl diphosphate biosynthesis via DXP pathway; isopentenyl diphosphate from 1-deoxy-D-xylulose 5-phosphate: step 1/6. In terms of biological role, catalyzes the NADPH-dependent rearrangement and reduction of 1-deoxy-D-xylulose-5-phosphate (DXP) to 2-C-methyl-D-erythritol 4-phosphate (MEP). This chain is 1-deoxy-D-xylulose 5-phosphate reductoisomerase, found in Vesicomyosocius okutanii subsp. Calyptogena okutanii (strain HA).